A 449-amino-acid chain; its full sequence is Phosphoglucosamine mutase (449 aa).

Catalysis depends on Ser100, which acts as the Phosphoserine intermediate. Positions 100, 241, 243, and 245 each coordinate Mg(2+). The residue at position 100 (Ser100) is a Phosphoserine.

This sequence belongs to the phosphohexose mutase family. Requires Mg(2+) as cofactor. Activated by phosphorylation.

It carries out the reaction alpha-D-glucosamine 1-phosphate = D-glucosamine 6-phosphate. Functionally, catalyzes the conversion of glucosamine-6-phosphate to glucosamine-1-phosphate. The chain is Phosphoglucosamine mutase from Clostridium botulinum (strain ATCC 19397 / Type A).